The sequence spans 109 residues: Globin (109 aa).

The 107-residue stretch at 3 to 109 (PLTAAEVSSL…IFPIAGIHAL (107 aa)) folds into the Globin domain.

The protein belongs to the globin family. As to quaternary structure, monomer.

Functionally, oxygen binding protein. This chain is Globin, found in Dicrocoelium dendriticum (Small liver fluke).